The following is a 355-amino-acid chain: Dihydroorotate dehydrogenase (quinone) (355 aa).

Residues 68–72 (AGFDK) and Thr92 each bind FMN. Substrate is bound at residue Lys72. 117 to 121 (NRMGF) is a substrate binding site. FMN contacts are provided by Asn154 and Asn190. Asn190 is a substrate binding site. Ser193 serves as the catalytic Nucleophile. Asn195 is a substrate binding site. FMN-binding residues include Lys232 and Thr260. Substrate is bound at residue 261–262 (NT). FMN-binding positions include Gly286, Gly315, and 336 to 337 (YS).

This sequence belongs to the dihydroorotate dehydrogenase family. Type 2 subfamily. Monomer. It depends on FMN as a cofactor.

It localises to the cell membrane. The catalysed reaction is (S)-dihydroorotate + a quinone = orotate + a quinol. Its pathway is pyrimidine metabolism; UMP biosynthesis via de novo pathway; orotate from (S)-dihydroorotate (quinone route): step 1/1. Catalyzes the conversion of dihydroorotate to orotate with quinone as electron acceptor. This is Dihydroorotate dehydrogenase (quinone) from Nocardioides sp. (strain ATCC BAA-499 / JS614).